The following is a 607-amino-acid chain: Glutamine--fructose-6-phosphate aminotransferase [isomerizing] (607 aa).

Residue Cys2 is the Nucleophile; for GATase activity of the active site. Residues 2–217 enclose the Glutamine amidotransferase type-2 domain; the sequence is CGIIGIIGRE…EGDWVVLTRE (216 aa). 2 SIS domains span residues 283 to 422 and 455 to 597; these read PDFD…VKGQ and VATA…VDQP. The For Fru-6P isomerization activity role is filled by Lys602.

As to quaternary structure, homodimer.

It is found in the cytoplasm. It catalyses the reaction D-fructose 6-phosphate + L-glutamine = D-glucosamine 6-phosphate + L-glutamate. Its function is as follows. Catalyzes the first step in hexosamine metabolism, converting fructose-6P into glucosamine-6P using glutamine as a nitrogen source. This is Glutamine--fructose-6-phosphate aminotransferase [isomerizing] from Zymomonas mobilis subsp. mobilis (strain ATCC 31821 / ZM4 / CP4).